A 109-amino-acid polypeptide reads, in one-letter code: Aquaporin-2 (109 aa).

At 1-6 the chain is on the cytoplasmic side; the sequence is SIAFSR. A helical membrane pass occupies residues 7 to 27; it reads AVFTEFLATLLFVFFGLGSAL. Residues 28 to 35 are Extracellular-facing; sequence NWPQALPS. Residues 36 to 54 form a helical membrane-spanning segment; it reads VLQIAMAFGLAIGTLVQML. Residues 55-59 lie on the Cytoplasmic side of the membrane; it reads GHISG. The discontinuously helical intramembrane region spans 60–69; sequence AHINPAVTVA. Positions 63-65 match the NPA 1 motif; it reads NPA. The Cytoplasmic portion of the chain corresponds to 70-80; sequence CLVGCHISFLR. The helical transmembrane segment at 81–102 threads the bilayer; sequence AAFYVAAQLLGAVAGAALLHEV. The Extracellular portion of the chain corresponds to 103 to 109; that stretch reads TPPSIRG.

This sequence belongs to the MIP/aquaporin (TC 1.A.8) family. Homotetramer. In terms of processing, serine phosphorylation is necessary and sufficient for expression at the apical membrane. Endocytosis is not phosphorylation-dependent. Post-translationally, N-glycosylated.

Its subcellular location is the apical cell membrane. It localises to the basolateral cell membrane. The protein localises to the cell membrane. The protein resides in the cytoplasmic vesicle membrane. It is found in the golgi apparatus. Its subcellular location is the trans-Golgi network membrane. The catalysed reaction is H2O(in) = H2O(out). The enzyme catalyses glycerol(in) = glycerol(out). Functionally, forms a water-specific channel that provides the plasma membranes of renal collecting duct with high permeability to water, thereby permitting water to move in the direction of an osmotic gradient. Plays an essential role in renal water homeostasis. Could also be permeable to glycerol. The polypeptide is Aquaporin-2 (Erinaceus europaeus (Western European hedgehog)).